Reading from the N-terminus, the 858-residue chain is KN motif and ankyrin repeat domain-containing protein 2 (858 aa).

The segment at 1 to 29 (MAQVLHVSAPFPGTPGPASPPAFPSKEPD) is disordered. The segment at 1–72 (MAQVLHVSAP…AVQRRPRLGS (72 aa)) is interaction with AIFM1. A compositionally biased stretch (pro residues) spans 12–23 (PGTPGPASPPAF). Phosphoserine occurs at positions 19, 83, 86, 89, and 92. At R105 the chain carries Omega-N-methylarginine. The segment at 140–182 (AAPAGLGSLTPSAAGSTSSLVGVGLPPPTPRGSGLSTPVPPSA) is disordered. Over residues 148-159 (LTPSAAGSTSSL) the composition is skewed to polar residues. T168 bears the Phosphothreonine mark. 2 coiled-coil regions span residues 183 to 234 (GHLA…KSQK) and 282 to 313 (EAAL…QADL). Residue S323 is modified to Phosphoserine. The residue at position 329 (T329) is a Phosphothreonine. Phosphoserine occurs at positions 356 and 375. Disordered stretches follow at residues 412–451 (CDGA…PAHD) and 488–590 (QKEE…SSAK). Over residues 421–435 (APAESSLSPPESEGA) the composition is skewed to low complexity. Residues 436–446 (TQAQPEKNTGQ) show a composition bias toward polar residues. Residues 488–499 (QKEEPTDPEAHR) show a composition bias toward basic and acidic residues. Over residues 509–528 (GSISPRYESSSEDSSTAENF) the composition is skewed to low complexity. S547 carries the post-translational modification Phosphoserine. The span at 555-569 (RPKETAKAKTSREES) shows a compositional bias: basic and acidic residues. At T559 the chain carries Phosphothreonine. The ANK 0; degenerate repeat unit spans residues 621-658 (RELKVAYTTVLQEWLRLACRSDAHPELVRRHLVTFRAM). ANK repeat units lie at residues 673 to 703 (NGNT…QVDK), 707 to 740 (AGYS…DVNA), 745 to 774 (AGQT…DVNV), 778 to 808 (DGST…DISI), and 812 to 842 (DGST…KCSF). Residues 676–842 (TALHYSVSHA…YSRMNIKCSF (167 aa)) are interaction with NCOA1.

Interacts (non-phosphorylated form) with NCOA1; NCOA2 AND NCOA3. Interacts with AIFM1. Interacts with ARHGDIA; the interaction is direct and may regulate the interaction of ARHGDIA with RHOA, RAC1 and CDC42. Interacts (via ANK repeats 1-5) with KIF21A. Post-translationally, phosphorylated by casein kinase II upon estrogen stimulation. Phosphorylation induces the release by KANK2 of NCOA1 and its translocation to the nucleus where NCOA1 can activate gene transcription.

It localises to the cytoplasm. Its subcellular location is the mitochondrion. Functionally, involved in transcription regulation by sequestering in the cytoplasm nuclear receptor coactivators such as NCOA1, NCOA2 and NCOA3. Involved in regulation of caspase-independent apoptosis by sequestering the proapoptotic factor AIFM1 in mitochondria. Pro-apoptotic stimuli can induce its proteasomal degradation allowing the translocation of AIFM1 to the nucleus to induce apoptosis. Involved in the negative control of vitamin D receptor signaling pathway. Involved in actin stress fibers formation through its interaction with ARHGDIA and the regulation of the Rho signaling pathway. May thereby play a role in cell adhesion and migration, regulating for instance podocytes migration during development of the kidney. Through the Rho signaling pathway may also regulate cell proliferation. This is KN motif and ankyrin repeat domain-containing protein 2 (KANK2) from Bos taurus (Bovine).